Here is a 109-residue protein sequence, read N- to C-terminus: Nucleoid-associated protein VC_1055 (109 aa).

Positions 1-22 (MFGKGGMGNLMKQAQQMQERMQ) are disordered.

It belongs to the YbaB/EbfC family. In terms of assembly, homodimer.

It localises to the cytoplasm. The protein localises to the nucleoid. Its function is as follows. Binds to DNA and alters its conformation. May be involved in regulation of gene expression, nucleoid organization and DNA protection. The protein is Nucleoid-associated protein VC_1055 of Vibrio cholerae serotype O1 (strain ATCC 39315 / El Tor Inaba N16961).